The primary structure comprises 194 residues: MPTLIVATGNPGKLAEMQTYLEPLGCQLTLKPTEIEVEETGSTFYENACLKASQVAKAVNQWAIADDSGLAVDALDGAPGLYSARYGNTDRERIAKLLQALEGVSQRQAQFICVVSIAAPDGSIQLSTKGICSGEITHSPRGDQGFGYDPIFWLPEHKKTFAEMTKVEKQKVSHRGKAFNKLIHQWPGLKFDSF.

8–13 serves as a coordination point for substrate; the sequence is TGNPGK. The Mg(2+) site is built by E38 and D67. D67 functions as the Proton acceptor in the catalytic mechanism. Substrate contacts are provided by residues S68, 146 to 149, K169, and 174 to 175; these read FGYD and HR.

Belongs to the HAM1 NTPase family. Homodimer. Requires Mg(2+) as cofactor.

It carries out the reaction XTP + H2O = XMP + diphosphate + H(+). The enzyme catalyses dITP + H2O = dIMP + diphosphate + H(+). The catalysed reaction is ITP + H2O = IMP + diphosphate + H(+). In terms of biological role, pyrophosphatase that catalyzes the hydrolysis of nucleoside triphosphates to their monophosphate derivatives, with a high preference for the non-canonical purine nucleotides XTP (xanthosine triphosphate), dITP (deoxyinosine triphosphate) and ITP. Seems to function as a house-cleaning enzyme that removes non-canonical purine nucleotides from the nucleotide pool, thus preventing their incorporation into DNA/RNA and avoiding chromosomal lesions. This chain is dITP/XTP pyrophosphatase, found in Synechocystis sp. (strain ATCC 27184 / PCC 6803 / Kazusa).